We begin with the raw amino-acid sequence, 86 residues long: Putative defensin-like protein 189 (86 aa).

The N-terminal stretch at 1 to 28 is a signal peptide; it reads MKMAKSANEIGFITCLVVFLVLTGQSNG. Intrachain disulfides connect C39–C85, C52–C71, C57–C80, and C61–C82.

This sequence belongs to the DEFL family.

The protein localises to the secreted. This Arabidopsis thaliana (Mouse-ear cress) protein is Putative defensin-like protein 189.